Here is a 118-residue protein sequence, read N- to C-terminus: T cell receptor gamma variable 8 (118 aa).

The first 17 residues, 1–17 (MLLALALLLAFLPPASQ), serve as a signal peptide directing secretion. Residues 18-118 (KSSNLEGRTK…GVYYCATWDR (101 aa)) enclose the Ig-like domain. A disulfide bridge links Cys41 with Cys113.

Gamma-delta TR is a heterodimer composed of a gamma and delta chain; disulfide-linked. The gamma-delta TR is associated with the transmembrane signaling CD3 coreceptor proteins following the stoichiometry: a single gamma-delta TR heterodimer associates with one CD3D-CD3E heterodimer, one CD3G-CD3E heterodimer and one CD247 homodimer forming a stable octameric structure. Upon activation, gamma-delta TR complex associates with FCER1G to initiate intracellular signaling.

It is found in the cell membrane. In terms of biological role, v region of the variable domain of T cell receptor (TR) gamma chain that participates in the antigen recognition. Gamma-delta TRs recognize a variety of self and foreign non-peptide antigens frequently expressed at the epithelial boundaries between the host and external environment, including endogenous lipids presented by MH-like protein CD1D and phosphoantigens presented by butyrophilin-like molecule BTN3A1. Upon antigen recognition induces rapid, innate-like immune responses involved in pathogen clearance and tissue repair. Binding of gamma-delta TR complex to antigen triggers phosphorylation of immunoreceptor tyrosine-based activation motifs (ITAMs) in the CD3 chains by the LCK and FYN kinases, allowing the recruitment, phosphorylation, and activation of ZAP70 that facilitates phosphorylation of the scaffolding proteins LCP2 and LAT. This lead to the formation of a supramolecular signalosome that recruits the phospholipase PLCG1, resulting in calcium mobilization and ERK activation, ultimately leading to T cell expansion and differentiation into effector cells. Gamma-delta TRs are produced through somatic rearrangement of a limited repertoire of variable (V), diversity (D), and joining (J) genes. The potential diversity of gamma-delta TRs is conferred by the unique ability to rearrange (D) genes in tandem and to utilize all three reading frames. The combinatorial diversity is considerably increased by the sequence exonuclease trimming and random nucleotide (N) region additions which occur during the V-(D)-J rearrangements. This chain is T cell receptor gamma variable 8, found in Homo sapiens (Human).